The following is a 72-amino-acid chain: Translation initiation factor IF-1 (72 aa).

An S1-like domain is found at 1-72 (MSKEDVIEVE…TRGRITWRAK (72 aa)).

The protein belongs to the IF-1 family. Component of the 30S ribosomal translation pre-initiation complex which assembles on the 30S ribosome in the order IF-2 and IF-3, IF-1 and N-formylmethionyl-tRNA(fMet); mRNA recruitment can occur at any time during PIC assembly.

The protein localises to the cytoplasm. One of the essential components for the initiation of protein synthesis. Stabilizes the binding of IF-2 and IF-3 on the 30S subunit to which N-formylmethionyl-tRNA(fMet) subsequently binds. Helps modulate mRNA selection, yielding the 30S pre-initiation complex (PIC). Upon addition of the 50S ribosomal subunit IF-1, IF-2 and IF-3 are released leaving the mature 70S translation initiation complex. This chain is Translation initiation factor IF-1, found in Acetivibrio thermocellus (strain ATCC 27405 / DSM 1237 / JCM 9322 / NBRC 103400 / NCIMB 10682 / NRRL B-4536 / VPI 7372) (Clostridium thermocellum).